The chain runs to 301 residues: Aspartate carbamoyltransferase catalytic subunit (301 aa).

Residues Arg46 and Thr47 each coordinate carbamoyl phosphate. Position 74 (Lys74) interacts with L-aspartate. The carbamoyl phosphate site is built by Arg96, His124, and Gln127. L-aspartate contacts are provided by Arg157 and Arg208. The carbamoyl phosphate site is built by Ala249 and Pro250.

This sequence belongs to the aspartate/ornithine carbamoyltransferase superfamily. ATCase family. As to quaternary structure, heterododecamer (2C3:3R2) of six catalytic PyrB chains organized as two trimers (C3), and six regulatory PyrI chains organized as three dimers (R2).

It carries out the reaction carbamoyl phosphate + L-aspartate = N-carbamoyl-L-aspartate + phosphate + H(+). It functions in the pathway pyrimidine metabolism; UMP biosynthesis via de novo pathway; (S)-dihydroorotate from bicarbonate: step 2/3. Catalyzes the condensation of carbamoyl phosphate and aspartate to form carbamoyl aspartate and inorganic phosphate, the committed step in the de novo pyrimidine nucleotide biosynthesis pathway. The protein is Aspartate carbamoyltransferase catalytic subunit of Bacillus cereus (strain ATCC 14579 / DSM 31 / CCUG 7414 / JCM 2152 / NBRC 15305 / NCIMB 9373 / NCTC 2599 / NRRL B-3711).